A 465-amino-acid chain; its full sequence is WAS protein family homolog 2 (465 aa).

The tract at residues 1–54 (MTPVRMQHSLAGQTYAVPLIQPDLRREEAVQQMADALQYLQKVSGDIFSRISQQ) is required for WASH complex assembly. The WHD1 stretch occupies residues 1–167 (MTPVRMQHSL…EGLGGLPSNI (167 aa)). K220 is covalently cross-linked (Glycyl lysine isopeptide (Lys-Gly) (interchain with G-Cter in ubiquitin)). Disordered regions lie at residues 297-407 (QDGV…QGGH) and 422-465 (GISG…DWES). A compositionally biased stretch (pro residues) spans 302–314 (TPPPPPPPPPPAP). The interval 349 to 465 (QGAPREVVDP…AEEDEDDWES (117 aa)) is VCA. Residues 361–383 (GRATLLESIRQAGGIGKAKLRSM) enclose the WH2 domain. A compositionally biased stretch (basic and acidic residues) spans 382–398 (SMKERKLEKKKQKEQEQ). Gly residues predominate over residues 424-436 (SGKGPGAGEGPGG). Residues 456 to 465 (AEEDEDDWES) are compositionally biased toward acidic residues.

Belongs to the WASH1 family. As to quaternary structure, component of the WASH core complex also described as WASH regulatory complex (SHRC) composed of WASH (WASHC1, WASH2P or WASH3P), WASHC2 (WASHC2A or WASHC2C), WASHC3, WASHC4 and WASHC5. The WASH core complex associates with the F-actin-capping protein dimer (formed by CAPZA1, CAPZA2 or CAPZA3 and CAPZB) in a transient or substoichiometric manner which was initially described as WASH complex. Interacts (via WHD1 region) with WASHC2C; the interaction is direct. Interacts with alpha-tubulin. Interacts with BECN1; WASHC1 and AMBRA1 can competitively interact with BECN1. Interacts with BLOC1S2; may associate with the BLOC-1 complex. Interacts with tubulin gamma chain (TUBG1 or TUBG2). Interacts with EXOC1, EXOC4, EXOC8; in MMP14-positive endosomes in breast tumor cells; indicative for an association with the exocyst complex.

Its subcellular location is the early endosome membrane. The protein localises to the recycling endosome membrane. It is found in the late endosome. The protein resides in the cytoplasmic vesicle. It localises to the autophagosome. Its subcellular location is the cytoplasm. The protein localises to the cytoskeleton. It is found in the microtubule organizing center. The protein resides in the centrosome. It localises to the centriole. In terms of biological role, acts as a nucleation-promoting factor at the surface of endosomes, where it recruits and activates the Arp2/3 complex to induce actin polymerization, playing a key role in the fission of tubules that serve as transport intermediates during endosome sorting. Involved in endocytic trafficking of EGF. Involved in transferrin receptor recycling. Regulates the trafficking of endosomal alpha5beta1 integrin to the plasma membrane and involved in invasive cell migration. In T-cells involved in endosome-to-membrane recycling of receptors including T-cell receptor (TCR), CD28 and ITGAL; proposed to be implicated in T-cell proliferation and effector function. In dendritic cells involved in endosome-to-membrane recycling of major histocompatibility complex (MHC) class II probably involving retromer and subsequently allowing antigen sampling, loading and presentation during T-cell activation. Involved in Arp2/3 complex-dependent actin assembly driving Salmonella typhimurium invasion independent of ruffling. Involved in the exocytosis of MMP14 leading to matrix remodeling during invasive migration and implicating late endosome-to-plasma membrane tubular connections and cooperation with the exocyst complex. Involved in negative regulation of autophagy independently from its role in endosomal sorting by inhibiting BECN1 ubiquitination to inactivate PIK3C3/Vps34 activity. In Homo sapiens (Human), this protein is WAS protein family homolog 2 (WASH2P).